The sequence spans 169 residues: Phycobiliprotein beta chain (169 aa).

Residue Asn-72 is modified to N4-methylasparagine. Cys-82 serves as a coordination point for (2R,3E)-phycocyanobilin.

Belongs to the phycobiliprotein family. Heterodimer of an alpha and a beta chain. Post-translationally, contains one covalently linked bilin chromophore.

The protein localises to the cellular thylakoid membrane. Light-harvesting photosynthetic bile pigment-protein from the phycobiliprotein complex. This is a protein functionally equivalent to, but with weaker absorbance than, allophycocyanin beta chain. The sequence is that of Phycobiliprotein beta chain (apcD) from Mastigocladus laminosus (Fischerella sp.).